The primary structure comprises 419 residues: Carboxypeptidase A1 (419 aa).

The signal sequence occupies residues 1–16 (MRGLLVLSVLLGAVFG). A propeptide spans 17–110 (KEDFVGHQVL…QEQMFAFRSR (94 aa)) (activation peptide). The Peptidase M14 domain occupies 121-414 (TYHTLEEIYD…LALLTIMEHT (294 aa)). Residues histidine 179 and glutamate 182 each coordinate Zn(2+). Residues 179-182 (HSRE), arginine 237, and 254-255 (NR) contribute to the substrate site. Cysteines 248 and 271 form a disulfide. Histidine 306 serves as a coordination point for Zn(2+). Residues 307 to 308 (SY) and tyrosine 358 each bind substrate. Residue glutamate 380 is the Proton donor/acceptor of the active site.

It belongs to the peptidase M14 family. Monomer. May form a complex with proelastase 2. The cofactor is Zn(2+).

It localises to the secreted. The catalysed reaction is Release of a C-terminal amino acid, but little or no action with -Asp, -Glu, -Arg, -Lys or -Pro.. It carries out the reaction leukotriene C4 + H2O = leukotriene F4 + glycine. Its activity is regulated as follows. Inhibited by interaction with the S.magnifica carboxypeptidase inhibitor SmCI. In terms of biological role, carboxypeptidase that catalyzes the release of a C-terminal amino acid, but has little or no action with -Asp, -Glu, -Arg, -Lys or -Pro. Catalyzes the conversion of leukotriene C4 to leukotriene F4 via the hydrolysis of an amide bond. The chain is Carboxypeptidase A1 from Homo sapiens (Human).